Reading from the N-terminus, the 603-residue chain is Polypeptide N-acetylgalactosaminyltransferase 10 (603 aa).

Residues 1 to 11 are Cytoplasmic-facing; the sequence is MRRKEKRLLQA. A helical; Signal-anchor for type II membrane protein transmembrane segment spans residues 12 to 31; it reads VALALAALVLLPNVGLWALY. The Lumenal segment spans residues 32–603; it reads RERQPDGSPG…STVLENFNKN (572 aa). 2 N-linked (GlcNAc...) asparagine glycosylation sites follow: asparagine 124 and asparagine 146. 5 disulfide bridges follow: cysteine 135-cysteine 365, cysteine 356-cysteine 432, cysteine 471-cysteine 488, cysteine 523-cysteine 538, and cysteine 563-cysteine 578. Positions 144–253 are catalytic subdomain A; it reads LPNTSIIIPF…VNWLPPLLDR (110 aa). Residues aspartate 185 and arginine 214 each coordinate substrate. Aspartate 237 is a Mn(2+) binding site. A substrate-binding site is contributed by serine 238. Histidine 239 is a Mn(2+) binding site. A catalytic subdomain B region spans residues 311–373; sequence PFESPVMAGG…PCSRVGHIYR (63 aa). Tryptophan 342 contributes to the substrate binding site. Residue histidine 370 coordinates Mn(2+). Positions 373 and 378 each coordinate substrate. The flexible loop stretch occupies residues 373 to 384; that stretch reads RKYVPYKVPAGV. The Ricin B-type lectin domain occupies 458 to 590; that stretch reads AAWGEIRNVG…SSLTQQWLFE (133 aa). Asparagine 593 carries N-linked (GlcNAc...) asparagine glycosylation.

The protein belongs to the glycosyltransferase 2 family. GalNAc-T subfamily. Mn(2+) is required as a cofactor. In terms of tissue distribution, expressed at higher level than GALNT9. In the developing hindbrain region of 14.5 dpc embryos it accumulates in the rapidly dividing, undifferentiated ventricular zone adjacent to the pons. It also accumulates in the regions immediately rostral and caudal to the dorsal rhombic lips differentiating into the cerebellum. Not expressed in the developing choroid plexus.

It is found in the golgi apparatus membrane. It carries out the reaction L-seryl-[protein] + UDP-N-acetyl-alpha-D-galactosamine = a 3-O-[N-acetyl-alpha-D-galactosaminyl]-L-seryl-[protein] + UDP + H(+). The enzyme catalyses L-threonyl-[protein] + UDP-N-acetyl-alpha-D-galactosamine = a 3-O-[N-acetyl-alpha-D-galactosaminyl]-L-threonyl-[protein] + UDP + H(+). Its pathway is protein modification; protein glycosylation. Functionally, catalyzes the initial reaction in O-linked oligosaccharide biosynthesis, the transfer of an N-acetyl-D-galactosamine residue to a serine or threonine residue on the protein receptor. Has activity toward Muc5Ac and EA2 peptide substrates. The chain is Polypeptide N-acetylgalactosaminyltransferase 10 (Galnt10) from Mus musculus (Mouse).